The sequence spans 251 residues: MAAHLLIVDALNLIRRIHAVQGSPCVETCQHALDQLIIHSQPTHAVAVFDDDARSSGWRHQRLPDYKAGRPPMPDDLHNEMPALRAAFEQRGVRCWASDGNEADDLAATLALKVTEAGHQATIVSTDKGYCQLLSPGLRIRDYFQKRWLDAPFIEKEFGVLPRQLPDYWGLAGISSSKVPGVAGIGPKSATQLLIQFQNLEGIYAHLDEVPEKWRKKLETHKEMAFLCRDIARLQTDLHIDGNLQQLRLVR.

Position 104 (D104) interacts with Mg(2+). Residues 160–249 form the 5'-3' exonuclease domain; it reads VLPRQLPDYW…IDGNLQQLRL (90 aa). K(+)-binding residues include L171, A172, P180, V182, and I185. An interaction with DNA region spans residues 184 to 189; that stretch reads GIGPKS.

It belongs to the Xni family. Requires Mg(2+) as cofactor. K(+) is required as a cofactor.

Functionally, has flap endonuclease activity. During DNA replication, flap endonucleases cleave the 5'-overhanging flap structure that is generated by displacement synthesis when DNA polymerase encounters the 5'-end of a downstream Okazaki fragment. In Salmonella paratyphi A (strain ATCC 9150 / SARB42), this protein is Flap endonuclease Xni.